The following is a 100-amino-acid chain: Aspartyl/glutamyl-tRNA(Asn/Gln) amidotransferase subunit C (100 aa).

Belongs to the GatC family. In terms of assembly, heterotrimer of A, B and C subunits.

It carries out the reaction L-glutamyl-tRNA(Gln) + L-glutamine + ATP + H2O = L-glutaminyl-tRNA(Gln) + L-glutamate + ADP + phosphate + H(+). The catalysed reaction is L-aspartyl-tRNA(Asn) + L-glutamine + ATP + H2O = L-asparaginyl-tRNA(Asn) + L-glutamate + ADP + phosphate + 2 H(+). Functionally, allows the formation of correctly charged Asn-tRNA(Asn) or Gln-tRNA(Gln) through the transamidation of misacylated Asp-tRNA(Asn) or Glu-tRNA(Gln) in organisms which lack either or both of asparaginyl-tRNA or glutaminyl-tRNA synthetases. The reaction takes place in the presence of glutamine and ATP through an activated phospho-Asp-tRNA(Asn) or phospho-Glu-tRNA(Gln). In Streptococcus equi subsp. zooepidemicus (strain H70), this protein is Aspartyl/glutamyl-tRNA(Asn/Gln) amidotransferase subunit C.